A 313-amino-acid chain; its full sequence is MNIIFYHPFFEAKQWLSGLQSRLPTANIRQWRRGDTQPADYALVWQPPQEMLASRVELKGVFALGAGVDAILDQERRHPGTLPAGVPLVRLEDTGMSLQMQEYVVATVLRYFRRMDEYQLQQQQKLWQPLEPHQHDKFTIGILGAGVLGKSVAHKLAEFGFTVRCWSRTPKQIDGVTSFAGQEKLPAFIQGTQLLINLLPHTPQTAGILNQSLFSQLNANAYIINIARGAHLLERDLLAAMNAGQVAAATLDVFAEEPLPSMHPFWSHPRVTITPHIAAVTLPEVAMDQVVANIQAMEAGREPVGLVDVVRGY.

Arg-228 is an active-site residue. His-276 acts as the Proton donor in catalysis.

Belongs to the D-isomer specific 2-hydroxyacid dehydrogenase family. GhrA subfamily.

Its subcellular location is the cytoplasm. The catalysed reaction is glycolate + NADP(+) = glyoxylate + NADPH + H(+). It catalyses the reaction (R)-glycerate + NAD(+) = 3-hydroxypyruvate + NADH + H(+). The enzyme catalyses (R)-glycerate + NADP(+) = 3-hydroxypyruvate + NADPH + H(+). In terms of biological role, catalyzes the NADPH-dependent reduction of glyoxylate and hydroxypyruvate into glycolate and glycerate, respectively. The sequence is that of Glyoxylate/hydroxypyruvate reductase A from Yersinia enterocolitica serotype O:8 / biotype 1B (strain NCTC 13174 / 8081).